A 254-amino-acid polypeptide reads, in one-letter code: Alcohol dehydrogenase 2 (254 aa).

10–33 (FVAGLGGIGFDTSREIVKRGPKNL) lines the NAD(+) pocket. Residue Ser-138 coordinates substrate. The active-site Proton acceptor is Tyr-151.

This sequence belongs to the short-chain dehydrogenases/reductases (SDR) family. Homodimer.

The catalysed reaction is a primary alcohol + NAD(+) = an aldehyde + NADH + H(+). The enzyme catalyses a secondary alcohol + NAD(+) = a ketone + NADH + H(+). The chain is Alcohol dehydrogenase 2 (Adh2) from Drosophila mojavensis (Fruit fly).